Here is a 335-residue protein sequence, read N- to C-terminus: tRNA N6-adenosine threonylcarbamoyltransferase (335 aa).

Residues histidine 111, histidine 115, and tyrosine 132 each coordinate Fe cation. Residues 132-136, aspartate 164, glycine 177, glutamate 181, and asparagine 260 contribute to the substrate site; that span reads YVSGG. Aspartate 288 contacts Fe cation.

Belongs to the KAE1 / TsaD family. In terms of assembly, monomer. Component of the KEOPS complex that consists of Kae1, Bud32, Cgi121 and Pcc1; the whole complex dimerizes. The cofactor is Fe(2+).

The protein resides in the cytoplasm. It catalyses the reaction L-threonylcarbamoyladenylate + adenosine(37) in tRNA = N(6)-L-threonylcarbamoyladenosine(37) in tRNA + AMP + H(+). In terms of biological role, required for the formation of a threonylcarbamoyl group on adenosine at position 37 (t(6)A37) in tRNAs that read codons beginning with adenine. Is a component of the KEOPS complex that is probably involved in the transfer of the threonylcarbamoyl moiety of threonylcarbamoyl-AMP (TC-AMP) to the N6 group of A37. Kae1 likely plays a direct catalytic role in this reaction, but requires other protein(s) of the complex to fulfill this activity. The chain is tRNA N6-adenosine threonylcarbamoyltransferase from Methanococcoides burtonii (strain DSM 6242 / NBRC 107633 / OCM 468 / ACE-M).